A 498-amino-acid polypeptide reads, in one-letter code: Neoxanthin synthase, chloroplastic (498 aa).

Residues 1–42 constitute a chloroplast transit peptide; that stretch reads METLLKPFPSLLLSSPTPYRSIVQQNPSFLSPTTKKKSRKCL.

This sequence belongs to the lycopene cyclase family. Expressed exclusively in chromoplast-containing tissues of flowers and fruits. Expressed in preanthesis flowers.

The protein resides in the plastid. It is found in the chloroplast. The catalysed reaction is all-trans-violaxanthin = all-trans-neoxanthin. It carries out the reaction a carotenoid psi-end group = a carotenoid beta-end derivative. It participates in carotenoid biosynthesis; neoxanthin biosynthesis. Its pathway is carotenoid biosynthesis; beta-carotene biosynthesis. Involved in the synthesis of neoxanthin, the last product of carotenoid synthesis and a precursor of abscisic acid. Involved in the beta-carotene biosynthesis. In Solanum lycopersicum (Tomato), this protein is Neoxanthin synthase, chloroplastic.